A 48-amino-acid polypeptide reads, in one-letter code: Large ribosomal subunit protein bL33B (48 aa).

Belongs to the bacterial ribosomal protein bL33 family.

This chain is Large ribosomal subunit protein bL33B, found in Lactococcus lactis subsp. cremoris (strain MG1363).